The following is a 114-amino-acid chain: Cystatin Pr17a (114 aa).

A signal peptide spans 1-18 (MSCLKIITLFLFLAAVIA). Positions 31–109 (GAPEQINPND…QAWLKKTSVK (79 aa)) constitute a Cystatin domain. A disulfide bridge links Cys-93 with Cys-113.

The protein belongs to the cystatin family. Expressed by the venom gland (posterior main gland) (at protein level).

It localises to the secreted. The protein is Cystatin Pr17a of Platymeris rhadamanthus (Red spot assassin bug).